The primary structure comprises 78 residues: Defensin-like protein 149 (78 aa).

Positions 1 to 25 (MMKKLIQLSFTVMIIFTILVLGVVA) are cleaved as a signal peptide. Disulfide bonds link cysteine 36–cysteine 77, cysteine 45–cysteine 65, cysteine 50–cysteine 71, and cysteine 54–cysteine 73.

It belongs to the DEFL family.

The protein localises to the secreted. This Arabidopsis thaliana (Mouse-ear cress) protein is Defensin-like protein 149 (LCR5).